The following is a 70-amino-acid chain: MKFQYALAKEQLGSNSRSGVKKLISKHHWLPEYYFSDLSFSVVQQWDSRAIEKTTIISCMRPANQEIYPL.

This is an uncharacterized protein from Saccharomyces cerevisiae (strain ATCC 204508 / S288c) (Baker's yeast).